A 740-amino-acid polypeptide reads, in one-letter code: MTSRDQLVQQVLRDLQEAVESEGLEGLIGAALEAKQVLSSFTLPICQKGGPGAQVLEVDSVALSLYPEDAPRNMLPLVCKGEGSLLFEATSLLLWGHTGLSLELRARTVVEMLLHRHYYLQGMIDSKVMLQAVRYSLCSEESPEMTNLSFATLEAIFDADVKATCFPTSFSNVWHLYALASILECNIYSIYPMRNIKIRPYFNRVIMPRCSTHVTSMLHIMWAGQPLTSHLFRHQYFAPVVGLEEVEADCTASLNPVPPNLGPLLPPAKTLELLNREPGLSYSHLCDRISITKSTFYRWRRQTQEHRQKVATRFSAKHFLQDSFHRGGFVPLQQFLQRFPEISRSTYYAWKHELLGSGANSALGPATPSREALAVPEVERPPGKKAAEEVGCSSLAAAMLSPPSMILMQRAKSFLEYCISLNKLVPYRCFKCRFPGISRSTYYNWRRKALRRTPSFKLSQAAFETAESLQPTDVGKETPFSLKREAGEEETGKAGSGAPLTSRGLISPKMPLSRWQRRLRRAARKQVLNGHLPFCRFRLRYPSLLPSTFWVWKSLSRRSPGMQIPSLSQRRQKPQGRQKPEGRQKPEEQQKPEGRQKPEGRQKPVEPQAMEADQNVPAMVVPPAETLPVATSPEDVPGGPSREGNIIQEAAMTQSQPHSGSLPSQTLAEAPGGSDGQVLVMDMLTTTRFKAQAKLFLQKRFQSKTFPSYKEFQALFPLTARSTYYMWKRALYEGLTLIDG.

Disordered stretches follow at residues 485-506, 560-616, and 653-673; these read EAGE…RGLI, PGMQ…DQNV, and TQSQ…APGG. Basic and acidic residues predominate over residues 578–604; that stretch reads QKPEGRQKPEEQQKPEGRQKPEGRQKP. Positions 653 to 667 are enriched in polar residues; that stretch reads TQSQPHSGSLPSQTL.

The protein belongs to the vertnin family.

Its subcellular location is the nucleus. Functionally, acts as a transcription factor that regulates development of thoracic vertebrae. This is Vertnin (Vrtn) from Mus musculus (Mouse).